We begin with the raw amino-acid sequence, 293 residues long: MAKFRLETSAERNGRNSVEGVERTVFFISDGTAITAEVLGHAVLSQFPIKITSYTLPFVASETRAEEIKQQINQIYQDTRIRPLVFYSIISSGVKNIITSSEGFCQDIVQTLVAPLQQETGLEPKPELNRTHGLTEKNLSQYDARIAAIDYALAHDDGISLRNLDQAQVILLGVSRCGKTPTSLYLAMQFGIQAANYPFTADDMDNLQLPATLKQFQHKLFGLTISPERLAAIREERRENSRYASLRQCRIEISEVEALFRKNKINYLNTTNYSVEEISTKIIDMMKLNRRMF.

173–180 (GVSRCGKT) serves as a coordination point for ADP.

Belongs to the pyruvate, phosphate/water dikinase regulatory protein family. PSRP subfamily.

It catalyses the reaction [pyruvate, water dikinase] + ADP = [pyruvate, water dikinase]-phosphate + AMP + H(+). It carries out the reaction [pyruvate, water dikinase]-phosphate + phosphate + H(+) = [pyruvate, water dikinase] + diphosphate. Its function is as follows. Bifunctional serine/threonine kinase and phosphorylase involved in the regulation of the phosphoenolpyruvate synthase (PEPS) by catalyzing its phosphorylation/dephosphorylation. The chain is Putative phosphoenolpyruvate synthase regulatory protein from Photorhabdus laumondii subsp. laumondii (strain DSM 15139 / CIP 105565 / TT01) (Photorhabdus luminescens subsp. laumondii).